Consider the following 563-residue polypeptide: Membrane protein insertase YidC (563 aa).

A helical membrane pass occupies residues 6 to 26 (TILWMIFSFSLLLLWNNWQIH). The disordered stretch occupies residues 36-68 (PPASSAASPAEGQQAAANGQAATPSVPTTPAAA). A run of 4 helical transmembrane segments spans residues 373–393 (WGWAIVALTVIIKAVFFPLAA), 443–463 (LPMVVQIPVFIALYWVLLASV), 482–502 (PYFILPAVMMATMFLQIKLNP), and 512–532 (VMMIMPLVFGGMMFFFPAGLV).

The protein belongs to the OXA1/ALB3/YidC family. Type 1 subfamily. In terms of assembly, interacts with the Sec translocase complex via SecD. Specifically interacts with transmembrane segments of nascent integral membrane proteins during membrane integration.

The protein localises to the cell inner membrane. In terms of biological role, required for the insertion and/or proper folding and/or complex formation of integral membrane proteins into the membrane. Involved in integration of membrane proteins that insert both dependently and independently of the Sec translocase complex, as well as at least some lipoproteins. Aids folding of multispanning membrane proteins. The chain is Membrane protein insertase YidC from Bordetella petrii (strain ATCC BAA-461 / DSM 12804 / CCUG 43448).